A 214-amino-acid chain; its full sequence is 3-isopropylmalate dehydratase small subunit (214 aa).

Belongs to the LeuD family. LeuD type 1 subfamily. As to quaternary structure, heterodimer of LeuC and LeuD.

The catalysed reaction is (2R,3S)-3-isopropylmalate = (2S)-2-isopropylmalate. It participates in amino-acid biosynthesis; L-leucine biosynthesis; L-leucine from 3-methyl-2-oxobutanoate: step 2/4. Its function is as follows. Catalyzes the isomerization between 2-isopropylmalate and 3-isopropylmalate, via the formation of 2-isopropylmaleate. The chain is 3-isopropylmalate dehydratase small subunit from Pseudomonas putida (strain W619).